The primary structure comprises 70 residues: Ribosome modulation factor (70 aa).

Belongs to the ribosome modulation factor family.

Its subcellular location is the cytoplasm. Its function is as follows. During stationary phase, converts 70S ribosomes to an inactive dimeric form (100S ribosomes). In Marinobacter adhaerens (strain DSM 23420 / HP15), this protein is Ribosome modulation factor.